The sequence spans 231 residues: Glycerol-3-phosphate acyltransferase (231 aa).

A run of 6 helical transmembrane segments spans residues 6-26, 55-75, 95-115, 130-150, 152-172, and 196-216; these read FLFLFLFFYILGSIPTGLVIG, WGILVFLLDFCKGFVPLTIFL, LTMKISLLAISPILGHMFSLF, IITSFNPLIGISGIIFFAIFL, LFGYASLSSIMASTLVNIFLW, and LFYFSINFATLIIIAKHYSNI.

Belongs to the PlsY family. In terms of assembly, probably interacts with PlsX.

Its subcellular location is the cell membrane. The catalysed reaction is an acyl phosphate + sn-glycerol 3-phosphate = a 1-acyl-sn-glycero-3-phosphate + phosphate. The protein operates within lipid metabolism; phospholipid metabolism. In terms of biological role, catalyzes the transfer of an acyl group from acyl-phosphate (acyl-PO(4)) to glycerol-3-phosphate (G3P) to form lysophosphatidic acid (LPA). This enzyme utilizes acyl-phosphate as fatty acyl donor, but not acyl-CoA or acyl-ACP. The chain is Glycerol-3-phosphate acyltransferase from Aster yellows witches'-broom phytoplasma (strain AYWB).